We begin with the raw amino-acid sequence, 357 residues long: O-methyltransferase 9 (357 aa).

S-adenosyl-L-methionine contacts are provided by G200, D224, N249, F250, and K263. Residue H267 is the Proton acceptor of the active site.

It belongs to the class I-like SAM-binding methyltransferase superfamily. Cation-independent O-methyltransferase family. COMT subfamily.

The catalysed reaction is (3,5-dichloro-2,4,6-trihydroxyphenyl)hexan-1-one + S-adenosyl-L-methionine = 1-(3,5-dichloro-2,6-dihydroxy-4-methoxyphenyl)hexan-1-one + S-adenosyl-L-homocysteine + H(+). This chain is O-methyltransferase 9 (omt9), found in Dictyostelium discoideum (Social amoeba).